We begin with the raw amino-acid sequence, 161 residues long: Allophycocyanin alpha-B chain (161 aa).

Position 71 is an N4-methylasparagine (N71). C81 contributes to the (2R,3E)-phycocyanobilin binding site.

It belongs to the phycobiliprotein family. Post-translationally, contains one covalently linked bilin chromophore.

It localises to the plastid. The protein resides in the chloroplast thylakoid membrane. Its function is as follows. Allophycocyanin is a photosynthetic bile pigment-protein complex with maximum absorption at approximately 650 nanometers. This chain is Allophycocyanin alpha-B chain (apcD), found in Porphyra purpurea (Red seaweed).